We begin with the raw amino-acid sequence, 118 residues long: Myotrophin (118 aa).

3 ANK repeats span residues 1–30 (MSDKEFMWALKNGDLDEVKDYVAKGEDVNR), 34–65 (GGRKPLHYAADCGQLEILEFLLLKGADINAPD), and 67–98 (HNITPLLSAVYEGHVSCVKLLLSKGADKTVKG).

Belongs to the myotrophin family.

The protein resides in the cytoplasm. Its subcellular location is the nucleus. The protein localises to the perinuclear region. Regulates NF-kappa-B transcription factor activity. Promotes growth of cardiomyocytes, but not cardiomyocyte proliferation. Promotes cardiac muscle hypertrophy. Plays a role in the regulation of the growth of actin filaments. Inhibits the activity of the F-actin-capping protein complex. The polypeptide is Myotrophin (MTPN) (Gallus gallus (Chicken)).